The primary structure comprises 290 residues: ATP synthase gamma chain (290 aa).

This sequence belongs to the ATPase gamma chain family. In terms of assembly, F-type ATPases have 2 components, CF(1) - the catalytic core - and CF(0) - the membrane proton channel. CF(1) has five subunits: alpha(3), beta(3), gamma(1), delta(1), epsilon(1). CF(0) has three main subunits: a, b and c.

Its subcellular location is the cell membrane. Produces ATP from ADP in the presence of a proton gradient across the membrane. The gamma chain is believed to be important in regulating ATPase activity and the flow of protons through the CF(0) complex. The chain is ATP synthase gamma chain from Heliobacterium modesticaldum (strain ATCC 51547 / Ice1).